A 268-amino-acid chain; its full sequence is Proenkephalin-A (268 aa).

The first 24 residues, 1 to 24 (MARFLRLCTWLLALGSCLLATVQA), serve as a signal peptide directing secretion. 3 cysteine pairs are disulfide-bonded: C26-C48, C30-C52, and C33-C65. The interval 163-184 (TGDNRAKDSHQQESTNNDEDMS) is disordered. Propeptides lie at residues 197-208 (SPQLEDEAKELQ) and 218-228 (VGRPEWWMDYQ). S252 bears the Phosphoserine mark.

This sequence belongs to the opioid neuropeptide precursor family. In terms of processing, proenkephalin-A is cleaved by CTSL to generate Met-enkephalin. Processed and degraded by ACE. Post-translationally, probably cleaved by ACE. In terms of processing, processed by ACE to generate Met-enkephalin in the nucleus accumbens of the brain. The N-terminal domain contains 6 conserved cysteines thought to be involved in disulfide bonding and/or processing. Spermatogenic and somatic cells.

It is found in the cytoplasmic vesicle. The protein localises to the secretory vesicle. Its subcellular location is the chromaffin granule lumen. The protein resides in the secreted. Neuropeptide that competes with and mimic the effects of opiate drugs. They play a role in a number of physiologic functions, including pain perception and responses to stress. Its function is as follows. Met-enkephalin-Arg-Phe neuropeptide acts as a strong ligand of Mu-type opioid receptor OPRM1. Met-enkephalin-Arg-Phe-binding to OPRM1 in the nucleus accumbens of the brain increases activation of OPRM1, leading to long-term synaptic depression of glutamate release. In terms of biological role, increases glutamate release in the striatum and decreases GABA concentration in the striatum. Functionally, increases glutamate release in the striatum. The protein is Proenkephalin-A (Penk) of Mus musculus (Mouse).